The primary structure comprises 314 residues: Porphobilinogen deaminase (314 aa).

Residue cysteine 249 is modified to S-(dipyrrolylmethanemethyl)cysteine.

It belongs to the HMBS family. Monomer. Dipyrromethane is required as a cofactor.

The catalysed reaction is 4 porphobilinogen + H2O = hydroxymethylbilane + 4 NH4(+). It participates in porphyrin-containing compound metabolism; protoporphyrin-IX biosynthesis; coproporphyrinogen-III from 5-aminolevulinate: step 2/4. Tetrapolymerization of the monopyrrole PBG into the hydroxymethylbilane pre-uroporphyrinogen in several discrete steps. The protein is Porphobilinogen deaminase of Brucella anthropi (strain ATCC 49188 / DSM 6882 / CCUG 24695 / JCM 21032 / LMG 3331 / NBRC 15819 / NCTC 12168 / Alc 37) (Ochrobactrum anthropi).